Reading from the N-terminus, the 347-residue chain is Quinolinate synthase (347 aa).

2 residues coordinate iminosuccinate: His47 and Ser68. Residue Cys113 coordinates [4Fe-4S] cluster. Iminosuccinate-binding positions include Tyr139 to Asn141 and Ser156. A [4Fe-4S] cluster-binding site is contributed by Cys200. Iminosuccinate-binding positions include His226–Glu228 and Thr243. Cys297 is a binding site for [4Fe-4S] cluster.

The protein belongs to the quinolinate synthase family. Type 1 subfamily. Requires [4Fe-4S] cluster as cofactor.

It localises to the cytoplasm. It carries out the reaction iminosuccinate + dihydroxyacetone phosphate = quinolinate + phosphate + 2 H2O + H(+). The protein operates within cofactor biosynthesis; NAD(+) biosynthesis; quinolinate from iminoaspartate: step 1/1. Catalyzes the condensation of iminoaspartate with dihydroxyacetone phosphate to form quinolinate. The sequence is that of Quinolinate synthase from Salmonella paratyphi A (strain ATCC 9150 / SARB42).